The following is a 360-amino-acid chain: MTKRLLILEDGTIFEGEPFGADIDVTGEIVFNTGMTGYQESITDQSYNGQILTFTYPLIGNYGINRDDYESISPTCKGVVVSEVSRLASNWRKQMTLDAFLKIKGIPGISGIDTRALTKIIRQHGTMKATMADDGDSIQHLKDQLRATVLPTNTIEQVSTKTAYPAPGIGKNIVLVDFGLKHSILREFSKRQCNITVVPFNITAEEVFQLNPDGLMLSNGPGNPEDLPEALDMIRGVQGKIPIFGICMGHQLFSLANGAKTCKMTFGHRGFNHAVREIATGRIDFTSQNHGYAVERSSLPDTLMVTHEDINDKTVEGVKHRDFPAFSVQFHPDAAPGPHDASYLFDEFLEMIDSWRCTSK.

The CPSase stretch occupies residues 1-169 (MTKRLLILED…TKTAYPAPGI (169 aa)). L-glutamine contacts are provided by S46, G220, and G222. In terms of domain architecture, Glutamine amidotransferase type-1 spans 172–358 (NIVLVDFGLK…LEMIDSWRCT (187 aa)). The active-site Nucleophile is C247. L-glutamine contacts are provided by M248, Q251, N289, G291, and Y292. Catalysis depends on residues H331 and D333.

This sequence belongs to the CarA family. Composed of two chains; the small (or glutamine) chain promotes the hydrolysis of glutamine to ammonia, which is used by the large (or ammonia) chain to synthesize carbamoyl phosphate. Tetramer of heterodimers (alpha,beta)4.

The catalysed reaction is hydrogencarbonate + L-glutamine + 2 ATP + H2O = carbamoyl phosphate + L-glutamate + 2 ADP + phosphate + 2 H(+). The enzyme catalyses L-glutamine + H2O = L-glutamate + NH4(+). Its pathway is amino-acid biosynthesis; L-arginine biosynthesis; carbamoyl phosphate from bicarbonate: step 1/1. The protein operates within pyrimidine metabolism; UMP biosynthesis via de novo pathway; (S)-dihydroorotate from bicarbonate: step 1/3. Small subunit of the glutamine-dependent carbamoyl phosphate synthetase (CPSase). CPSase catalyzes the formation of carbamoyl phosphate from the ammonia moiety of glutamine, carbonate, and phosphate donated by ATP, constituting the first step of 2 biosynthetic pathways, one leading to arginine and/or urea and the other to pyrimidine nucleotides. The small subunit (glutamine amidotransferase) binds and cleaves glutamine to supply the large subunit with the substrate ammonia. The protein is Carbamoyl phosphate synthase small chain of Streptococcus pyogenes serotype M18 (strain MGAS8232).